The primary structure comprises 243 residues: Biosynthetic peptidoglycan transglycosylase (243 aa).

A helical transmembrane segment spans residues 21–43 (LLIVSLVSALMSVLQVIVFRFVD).

Belongs to the glycosyltransferase 51 family.

Its subcellular location is the cell inner membrane. It carries out the reaction [GlcNAc-(1-&gt;4)-Mur2Ac(oyl-L-Ala-gamma-D-Glu-L-Lys-D-Ala-D-Ala)](n)-di-trans,octa-cis-undecaprenyl diphosphate + beta-D-GlcNAc-(1-&gt;4)-Mur2Ac(oyl-L-Ala-gamma-D-Glu-L-Lys-D-Ala-D-Ala)-di-trans,octa-cis-undecaprenyl diphosphate = [GlcNAc-(1-&gt;4)-Mur2Ac(oyl-L-Ala-gamma-D-Glu-L-Lys-D-Ala-D-Ala)](n+1)-di-trans,octa-cis-undecaprenyl diphosphate + di-trans,octa-cis-undecaprenyl diphosphate + H(+). It functions in the pathway cell wall biogenesis; peptidoglycan biosynthesis. Its function is as follows. Peptidoglycan polymerase that catalyzes glycan chain elongation from lipid-linked precursors. This Xylella fastidiosa (strain M12) protein is Biosynthetic peptidoglycan transglycosylase.